We begin with the raw amino-acid sequence, 241 residues long: Ribosomal RNA small subunit methyltransferase G (241 aa).

S-adenosyl-L-methionine contacts are provided by residues glycine 96, phenylalanine 101, 119–121, 147–148, and arginine 166; these read EAS and VE.

This sequence belongs to the methyltransferase superfamily. RNA methyltransferase RsmG family.

It localises to the cytoplasm. It carries out the reaction guanosine(527) in 16S rRNA + S-adenosyl-L-methionine = N(7)-methylguanosine(527) in 16S rRNA + S-adenosyl-L-homocysteine. Specifically methylates the N7 position of guanine in position 527 of 16S rRNA. The protein is Ribosomal RNA small subunit methyltransferase G of Syntrophus aciditrophicus (strain SB).